Consider the following 241-residue polypeptide: Uridylate kinase (241 aa).

Residues 10–13 (KLSG), glycine 53, and arginine 57 contribute to the ATP site. Residues aspartate 72 and 133 to 140 (AGSPYFST) each bind UMP. ATP-binding residues include asparagine 161, tyrosine 167, and aspartate 170.

This sequence belongs to the UMP kinase family. As to quaternary structure, homohexamer.

The protein resides in the cytoplasm. It catalyses the reaction UMP + ATP = UDP + ADP. It functions in the pathway pyrimidine metabolism; CTP biosynthesis via de novo pathway; UDP from UMP (UMPK route): step 1/1. Inhibited by UTP. Catalyzes the reversible phosphorylation of UMP to UDP. This chain is Uridylate kinase, found in Onion yellows phytoplasma (strain OY-M).